The sequence spans 134 residues: Small ribosomal subunit protein uS11 (134 aa).

Disordered stretches follow at residues 1-22 (MPPK…KNVA) and 114-134 (SIQD…RRRV). Positions 9–22 (AAKKVRRKEKKNVA) are enriched in basic residues.

This sequence belongs to the universal ribosomal protein uS11 family. Part of the 30S ribosomal subunit. Interacts with proteins S7 and S18. Binds to IF-3.

Located on the platform of the 30S subunit, it bridges several disparate RNA helices of the 16S rRNA. Forms part of the Shine-Dalgarno cleft in the 70S ribosome. In Streptomyces avermitilis (strain ATCC 31267 / DSM 46492 / JCM 5070 / NBRC 14893 / NCIMB 12804 / NRRL 8165 / MA-4680), this protein is Small ribosomal subunit protein uS11.